The chain runs to 155 residues: 6,7-dimethyl-8-ribityllumazine synthase (155 aa).

5-amino-6-(D-ribitylamino)uracil contacts are provided by residues phenylalanine 24, 58–60 (AFE), and 82–84 (VLI). A (2S)-2-hydroxy-3-oxobutyl phosphate-binding site is contributed by 87-88 (AT). Histidine 90 (proton donor) is an active-site residue. 5-amino-6-(D-ribitylamino)uracil is bound at residue phenylalanine 115. Position 129 (arginine 129) interacts with (2S)-2-hydroxy-3-oxobutyl phosphate.

This sequence belongs to the DMRL synthase family.

The enzyme catalyses (2S)-2-hydroxy-3-oxobutyl phosphate + 5-amino-6-(D-ribitylamino)uracil = 6,7-dimethyl-8-(1-D-ribityl)lumazine + phosphate + 2 H2O + H(+). It functions in the pathway cofactor biosynthesis; riboflavin biosynthesis; riboflavin from 2-hydroxy-3-oxobutyl phosphate and 5-amino-6-(D-ribitylamino)uracil: step 1/2. Its function is as follows. Catalyzes the formation of 6,7-dimethyl-8-ribityllumazine by condensation of 5-amino-6-(D-ribitylamino)uracil with 3,4-dihydroxy-2-butanone 4-phosphate. This is the penultimate step in the biosynthesis of riboflavin. In Chloroherpeton thalassium (strain ATCC 35110 / GB-78), this protein is 6,7-dimethyl-8-ribityllumazine synthase.